A 273-amino-acid chain; its full sequence is Dermonecrotic toxin LspaSicTox-alphaIA2i (273 aa).

The active site involves histidine 5. Positions 25 and 27 each coordinate Mg(2+). Histidine 41 acts as the Nucleophile in catalysis. Disulfide bonds link cysteine 45-cysteine 51 and cysteine 47-cysteine 190. Aspartate 85 provides a ligand contact to Mg(2+).

The protein belongs to the arthropod phospholipase D family. Class II subfamily. The cofactor is Mg(2+). In terms of tissue distribution, expressed by the venom gland.

It is found in the secreted. It carries out the reaction an N-(acyl)-sphingosylphosphocholine = an N-(acyl)-sphingosyl-1,3-cyclic phosphate + choline. It catalyses the reaction an N-(acyl)-sphingosylphosphoethanolamine = an N-(acyl)-sphingosyl-1,3-cyclic phosphate + ethanolamine. The catalysed reaction is a 1-acyl-sn-glycero-3-phosphocholine = a 1-acyl-sn-glycero-2,3-cyclic phosphate + choline. The enzyme catalyses a 1-acyl-sn-glycero-3-phosphoethanolamine = a 1-acyl-sn-glycero-2,3-cyclic phosphate + ethanolamine. In terms of biological role, dermonecrotic toxins cleave the phosphodiester linkage between the phosphate and headgroup of certain phospholipids (sphingolipid and lysolipid substrates), forming an alcohol (often choline) and a cyclic phosphate. This toxin acts on sphingomyelin (SM). It may also act on ceramide phosphoethanolamine (CPE), lysophosphatidylcholine (LPC) and lysophosphatidylethanolamine (LPE), but not on lysophosphatidylserine (LPS), and lysophosphatidylglycerol (LPG). It acts by transphosphatidylation, releasing exclusively cyclic phosphate products as second products. Induces dermonecrosis, hemolysis, increased vascular permeability, edema, inflammatory response, and platelet aggregation. In Loxosceles spadicea (Recluse spider), this protein is Dermonecrotic toxin LspaSicTox-alphaIA2i.